Consider the following 188-residue polypeptide: Abscisic acid receptor PYL8 (188 aa).

The tract at residues 25-176 (HELVDNQCSS…NLKSLADISE (152 aa)) is START-like. An intrachain disulfide couples cysteine 32 to cysteine 157. Lysine 61 is an abscisate binding site. Threonine 77 carries the post-translational modification Phosphothreonine; by CARK1. Positions 85–89 (SGLPA) match the Gate loop motif. Abscisate is bound by residues 89–94 (ATRSTE), 116–122 (RLKNYSS), and glutamate 141. The Latch loop signature appears at 115–117 (HRL).

It belongs to the PYR/PYL/RCAR abscisic acid intracellular receptor family. Monomer. Homodimer. Binds ABA on one subunit only. interacts with ABI1 and HAB1, and possibly with other PP2Cs. Binds to CARs protein in an ABA-independent manner, both at the plasma membrane and in the nucleus. Interacts directly with CAR1 and CAR4. Interacts with MYB44, MYB73 and MYB77 in an ABA-independent manner. Interacts with DDA1. Interacts with CARK1 in the cytosol. Binds to ABI1 when phosphorylated by CARK1. Interacts with AIP1 in the nucleus. Phosphorylated by CARK1 especially in response to abscisic acid (ABA); this phosphorylation promotes its stability and inhibitory ability to ABI1. Post-translationally, ubiquitinated in DDA1- and CDD complex-dependent manner. Ubiquitination leads to its subsequent proteasomal degradation.

The protein resides in the cytoplasm. It localises to the cytosol. The protein localises to the nucleus. Its subcellular location is the cell membrane. Receptor for abscisic acid (ABA) required for ABA-mediated responses such as stomatal closure and germination inhibition. Inhibits the activity of group-A protein phosphatases type 2C (PP2Cs) in an ABA-independent manner but more efficiently when activated by ABA. Confers enhanced sensitivity to ABA. Can be activated by both (-)-ABA and (+)-ABA. Mediates crosstalk between ABA and auxin signaling to regulate lateral root growth. Required for lateral root growth suppression by ABA. In response to auxin, promotes lateral root growth by enhancing MYB77-dependent transcription of the auxin-responsive gene IAA19. Enhances the abilities of MYB44 and MYB73 to activate IAA19 gene. The chain is Abscisic acid receptor PYL8 from Arabidopsis thaliana (Mouse-ear cress).